Here is a 435-residue protein sequence, read N- to C-terminus: Xylose isomerase (435 aa).

Catalysis depends on residues His100 and Asp103. Positions 231, 267, 270, 295, 306, 308, and 338 each coordinate Mg(2+).

Belongs to the xylose isomerase family. In terms of assembly, homotetramer. Requires Mg(2+) as cofactor.

The protein resides in the cytoplasm. The enzyme catalyses alpha-D-xylose = alpha-D-xylulofuranose. In Brucella canis (strain ATCC 23365 / NCTC 10854 / RM-666), this protein is Xylose isomerase.